A 204-amino-acid chain; its full sequence is uncharacterized protein (204 aa).

The Acyl-thioester intermediate role is filled by cysteine 52. Active-site residues include histidine 89 and aspartate 104.

This sequence belongs to the arylamine N-acetyltransferase family.

This is an uncharacterized protein from Acanthamoeba polyphaga mimivirus (APMV).